Consider the following 111-residue polypeptide: Large ribosomal subunit protein P2w (111 aa).

Residues 63-111 (ASVPSGGGVAVSAAPSSGGGGAAAPAEKKEAKKEEKEESDDDMGFSLFE) form a disordered region. Over residues 88–98 (AEKKEAKKEEK) the composition is skewed to basic and acidic residues. Position 101 is a phosphoserine (Ser101).

Belongs to the eukaryotic ribosomal protein P1/P2 family. As to quaternary structure, P1 and P2 exist as dimers at the large ribosomal subunit.

Its function is as follows. Plays an important role in the elongation step of protein synthesis. The protein is Large ribosomal subunit protein P2w (RPP2D) of Arabidopsis thaliana (Mouse-ear cress).